We begin with the raw amino-acid sequence, 287 residues long: Phosphatidylserine decarboxylase proenzyme (287 aa).

Residues Asp89, His146, and Ser252 each act as charge relay system; for autoendoproteolytic cleavage activity in the active site. Ser252 acts as the Schiff-base intermediate with substrate; via pyruvic acid; for decarboxylase activity in catalysis. Ser252 carries the pyruvic acid (Ser); by autocatalysis modification.

It belongs to the phosphatidylserine decarboxylase family. PSD-B subfamily. Prokaryotic type I sub-subfamily. Heterodimer of a large membrane-associated beta subunit and a small pyruvoyl-containing alpha subunit. It depends on pyruvate as a cofactor. Post-translationally, is synthesized initially as an inactive proenzyme. Formation of the active enzyme involves a self-maturation process in which the active site pyruvoyl group is generated from an internal serine residue via an autocatalytic post-translational modification. Two non-identical subunits are generated from the proenzyme in this reaction, and the pyruvate is formed at the N-terminus of the alpha chain, which is derived from the carboxyl end of the proenzyme. The autoendoproteolytic cleavage occurs by a canonical serine protease mechanism, in which the side chain hydroxyl group of the serine supplies its oxygen atom to form the C-terminus of the beta chain, while the remainder of the serine residue undergoes an oxidative deamination to produce ammonia and the pyruvoyl prosthetic group on the alpha chain. During this reaction, the Ser that is part of the protease active site of the proenzyme becomes the pyruvoyl prosthetic group, which constitutes an essential element of the active site of the mature decarboxylase.

The protein localises to the cell membrane. It catalyses the reaction a 1,2-diacyl-sn-glycero-3-phospho-L-serine + H(+) = a 1,2-diacyl-sn-glycero-3-phosphoethanolamine + CO2. It functions in the pathway phospholipid metabolism; phosphatidylethanolamine biosynthesis; phosphatidylethanolamine from CDP-diacylglycerol: step 2/2. Functionally, catalyzes the formation of phosphatidylethanolamine (PtdEtn) from phosphatidylserine (PtdSer). This is Phosphatidylserine decarboxylase proenzyme from Shewanella sediminis (strain HAW-EB3).